A 629-amino-acid chain; its full sequence is tRNA uridine 5-carboxymethylaminomethyl modification enzyme MnmG (629 aa).

Residues 13–18, valine 125, and serine 180 contribute to the FAD site; that span reads GGGHAG. Residue 273–287 coordinates NAD(+); sequence GPRYCPSIEDKVMRF. FAD is bound at residue glutamine 370.

This sequence belongs to the MnmG family. Homodimer. Heterotetramer of two MnmE and two MnmG subunits. Requires FAD as cofactor.

Its subcellular location is the cytoplasm. Functionally, NAD-binding protein involved in the addition of a carboxymethylaminomethyl (cmnm) group at the wobble position (U34) of certain tRNAs, forming tRNA-cmnm(5)s(2)U34. This is tRNA uridine 5-carboxymethylaminomethyl modification enzyme MnmG from Citrobacter koseri (strain ATCC BAA-895 / CDC 4225-83 / SGSC4696).